Consider the following 492-residue polypeptide: Probable malate:quinone oxidoreductase 1 (492 aa).

The protein belongs to the MQO family. FAD serves as cofactor.

It carries out the reaction (S)-malate + a quinone = a quinol + oxaloacetate. It functions in the pathway carbohydrate metabolism; tricarboxylic acid cycle; oxaloacetate from (S)-malate (quinone route): step 1/1. This is Probable malate:quinone oxidoreductase 1 from Staphylococcus epidermidis (strain ATCC 12228 / FDA PCI 1200).